We begin with the raw amino-acid sequence, 424 residues long: 3-oxo-tetronate kinase (424 aa).

ATP is bound by residues Ser-260, 364–367 (GGET), and Gly-407.

It belongs to the four-carbon acid sugar kinase family.

It carries out the reaction 3-dehydro-L-erythronate + ATP = 3-dehydro-4-O-phospho-L-erythronate + ADP + H(+). The catalysed reaction is 3-dehydro-D-erythronate + ATP = 3-dehydro-4-O-phospho-D-erythronate + ADP + H(+). Catalyzes the ATP-dependent phosphorylation of 3-oxo-tetronate to 3-oxo-tetronate 4-phosphate. This chain is 3-oxo-tetronate kinase, found in Pectobacterium atrosepticum (strain SCRI 1043 / ATCC BAA-672) (Erwinia carotovora subsp. atroseptica).